An 88-amino-acid polypeptide reads, in one-letter code: Sec-independent protein translocase protein TatA (88 aa).

The chain crosses the membrane as a helical span at residues Leu4–Gly24. Residues Ala45–Pro88 form a disordered region. A compositionally biased stretch (low complexity) spans Ser75–Pro88.

The protein belongs to the TatA/E family. In terms of assembly, the Tat system comprises two distinct complexes: a TatABC complex, containing multiple copies of TatA, TatB and TatC subunits, and a separate TatA complex, containing only TatA subunits. Substrates initially bind to the TatABC complex, which probably triggers association of the separate TatA complex to form the active translocon.

The protein resides in the cell inner membrane. Its function is as follows. Part of the twin-arginine translocation (Tat) system that transports large folded proteins containing a characteristic twin-arginine motif in their signal peptide across membranes. TatA could form the protein-conducting channel of the Tat system. The polypeptide is Sec-independent protein translocase protein TatA (Gluconacetobacter diazotrophicus (strain ATCC 49037 / DSM 5601 / CCUG 37298 / CIP 103539 / LMG 7603 / PAl5)).